A 583-amino-acid polypeptide reads, in one-letter code: Aspartate--tRNA(Asp/Asn) ligase (583 aa).

Glutamate 171 contacts L-aspartate. An aspartate region spans residues 195–198; sequence QLFK. Arginine 217 is an L-aspartate binding site. ATP is bound by residues 217–219 and glutamine 226; that span reads RDE. Position 443 (histidine 443) interacts with L-aspartate. Glutamate 476 lines the ATP pocket. Arginine 483 serves as a coordination point for L-aspartate. Residue 528–531 participates in ATP binding; the sequence is GLDR.

The protein belongs to the class-II aminoacyl-tRNA synthetase family. Type 1 subfamily. As to quaternary structure, homodimer.

The protein localises to the cytoplasm. It carries out the reaction tRNA(Asx) + L-aspartate + ATP = L-aspartyl-tRNA(Asx) + AMP + diphosphate. Its function is as follows. Aspartyl-tRNA synthetase with relaxed tRNA specificity since it is able to aspartylate not only its cognate tRNA(Asp) but also tRNA(Asn). Reaction proceeds in two steps: L-aspartate is first activated by ATP to form Asp-AMP and then transferred to the acceptor end of tRNA(Asp/Asn). The polypeptide is Aspartate--tRNA(Asp/Asn) ligase (Ruthia magnifica subsp. Calyptogena magnifica).